The following is a 345-amino-acid chain: N-acetyl-gamma-glutamyl-phosphate reductase (345 aa).

The active site involves Cys149.

This sequence belongs to the NAGSA dehydrogenase family. Type 1 subfamily.

The protein resides in the cytoplasm. The catalysed reaction is N-acetyl-L-glutamate 5-semialdehyde + phosphate + NADP(+) = N-acetyl-L-glutamyl 5-phosphate + NADPH + H(+). The protein operates within amino-acid biosynthesis; L-arginine biosynthesis; N(2)-acetyl-L-ornithine from L-glutamate: step 3/4. Catalyzes the NADPH-dependent reduction of N-acetyl-5-glutamyl phosphate to yield N-acetyl-L-glutamate 5-semialdehyde. In Desulforapulum autotrophicum (strain ATCC 43914 / DSM 3382 / VKM B-1955 / HRM2) (Desulfobacterium autotrophicum), this protein is N-acetyl-gamma-glutamyl-phosphate reductase.